Reading from the N-terminus, the 727-residue chain is Iron-sulfur clusters transporter atm1, mitochondrial (727 aa).

Residues 46-97 (NSPLRKDASKEPALASNSKTTNPIPTQASASVNPPKDARNATTAKKDLLSET) are disordered. Residues 60–77 (ASNSKTTNPIPTQASASV) are compositionally biased toward polar residues. The segment covering 81–94 (KDARNATTAKKDLL) has biased composition (basic and acidic residues). Residues 131–152 (VGTALSLLVGAKILNVEVPFYF) traverse the membrane as a helical segment. Residues 131–421 (VGTALSLLVG…LGSVYRELRQ (291 aa)) form the ABC transmembrane type-1 domain. The Mitochondrial intermembrane portion of the chain corresponds to 153-175 (KSIVDSMNIDFATVGGTAYTVAG). A helical membrane pass occupies residues 176–199 (SMIIAYGVTRIGATLFQELRNAVF). Residues 200–248 (ASVAQKAIRRVARNVFEHLLRLDLNFHLSRQTGGLTRAIDRGTKGISFL) lie on the Mitochondrial matrix side of the membrane. A helical transmembrane segment spans residues 249-272 (LTSMVFHVVPTALEISLVCGILTY). Residue Gln273 is a topological domain, mitochondrial intermembrane. The chain crosses the membrane as a helical span at residues 274 to 294 (YGFQFAAITAATMVAYTAFTI). Over 295–360 (TTTAWRTKFR…ASIKVTTSLA (66 aa)) the chain is Mitochondrial matrix. Glutathione contacts are provided by residues 300 to 304 (RTKFR) and 363 to 366 (NSGQ). A helical membrane pass occupies residues 361 to 379 (FLNSGQNMIFSSALAAMMY). Topologically, residues 380 to 394 (LAANGVANGNLTVGD) are mitochondrial intermembrane. A helical membrane pass occupies residues 395–416 (LVMVNQLVFQLSVPLNFLGSVY). Gly413 lines the glutathione pocket. At 417–727 (RELRQSLLDM…DMAPGPKAQQ (311 aa)) the chain is on the mitochondrial matrix side. The ABC transporter domain maps to 456 to 692 (IRFENVTFGY…NGIYAELWNA (237 aa)). ATP is bound by residues Tyr465 and 489–500 (GPSGCGKSTILR). The segment covering 702-719 (EFERETERDDVESKERDM) has biased composition (basic and acidic residues). A disordered region spans residues 702-727 (EFERETERDDVESKERDMAPGPKAQQ).

Belongs to the ABC transporter superfamily. ABCB family. Heavy Metal importer (TC 3.A.1.210) subfamily. In terms of assembly, homodimer.

It is found in the mitochondrion inner membrane. Functionally, performs an essential function in the generation of cytoplasmic iron-sulfur proteins by mediating the ATP-dependent export of Fe/S cluster precursors synthesized by nfs1 and other mitochondrial proteins. Hydrolyzes ATP. Binds glutathione and may function by transporting a glutathione-conjugated iron-sulfur compound. In Aspergillus fumigatus (strain ATCC MYA-4609 / CBS 101355 / FGSC A1100 / Af293) (Neosartorya fumigata), this protein is Iron-sulfur clusters transporter atm1, mitochondrial.